Consider the following 153-residue polypeptide: 3-hydroxyacyl-[acyl-carrier-protein] dehydratase FabZ (153 aa).

His-54 is a catalytic residue.

The protein belongs to the thioester dehydratase family. FabZ subfamily.

It localises to the cytoplasm. The catalysed reaction is a (3R)-hydroxyacyl-[ACP] = a (2E)-enoyl-[ACP] + H2O. Functionally, involved in unsaturated fatty acids biosynthesis. Catalyzes the dehydration of short chain beta-hydroxyacyl-ACPs and long chain saturated and unsaturated beta-hydroxyacyl-ACPs. This Shewanella sediminis (strain HAW-EB3) protein is 3-hydroxyacyl-[acyl-carrier-protein] dehydratase FabZ.